Here is a 337-residue protein sequence, read N- to C-terminus: Heat-inducible transcription repressor HrcA (337 aa).

This sequence belongs to the HrcA family.

Negative regulator of class I heat shock genes (grpE-dnaK-dnaJ and groELS operons). Prevents heat-shock induction of these operons. The chain is Heat-inducible transcription repressor HrcA from Nocardioides sp. (strain ATCC BAA-499 / JS614).